The chain runs to 232 residues: 7-cyano-7-deazaguanine synthase (232 aa).

7–17 (CSGGLDSVSLA) contacts ATP. Residues Cys185, Cys193, Cys196, and Cys199 each contribute to the Zn(2+) site.

The protein belongs to the QueC family. Zn(2+) is required as a cofactor.

The catalysed reaction is 7-carboxy-7-deazaguanine + NH4(+) + ATP = 7-cyano-7-deazaguanine + ADP + phosphate + H2O + H(+). Its pathway is purine metabolism; 7-cyano-7-deazaguanine biosynthesis. Functionally, catalyzes the ATP-dependent conversion of 7-carboxy-7-deazaguanine (CDG) to 7-cyano-7-deazaguanine (preQ(0)). The sequence is that of 7-cyano-7-deazaguanine synthase from Brucella abortus (strain S19).